The primary structure comprises 218 residues: Cytochrome b6 (218 aa).

Residues 35 to 55 (IFYCLGGITLVCFLIQFATGF) traverse the membrane as a helical segment. A heme c-binding site is contributed by C38. The heme b site is built by H89 and H103. 3 helical membrane-spanning segments follow: residues 93 to 113 (ASMMVLMLILHVFRVYLTGGF), 119 to 139 (LTWVTGVTMAVITVSFGVTGY), and 189 to 209 (LHTFVMPWLLAVFMLMHFLMI). H190 and H205 together coordinate heme b.

Belongs to the cytochrome b family. PetB subfamily. In terms of assembly, the 4 large subunits of the cytochrome b6-f complex are cytochrome b6, subunit IV (17 kDa polypeptide, PetD), cytochrome f and the Rieske protein, while the 4 small subunits are PetG, PetL, PetM and PetN. The complex functions as a dimer. It depends on heme b as a cofactor. Requires heme c as cofactor.

The protein resides in the cellular thylakoid membrane. In terms of biological role, component of the cytochrome b6-f complex, which mediates electron transfer between photosystem II (PSII) and photosystem I (PSI), cyclic electron flow around PSI, and state transitions. The polypeptide is Cytochrome b6 (Synechococcus sp. (strain CC9902)).